The primary structure comprises 352 residues: C-X-C chemokine receptor type 4 (352 aa).

The segment at 1 to 21 is important for chemokine binding and signaling; it reads MEGISIYTSDNYSEELGSGDY. Residues 1–38 are Extracellular-facing; it reads MEGISIYTSDNYSEELGSGDYDSIKEPCFREENAHFNR. Position 7 is a sulfotyrosine (Y7). A glycan (N-linked (GlcNAc...) asparagine) is linked at N11. Y12 carries the post-translational modification Sulfotyrosine. An O-linked (Xyl...) (chondroitin sulfate) serine glycan is attached at S18. The residue at position 21 (Y21) is a Sulfotyrosine. 2 cysteine pairs are disulfide-bonded: C28-C274 and C109-C186. A helical transmembrane segment spans residues 39-63; sequence IFLPTIYSIIFLTGIVGNGLVILVM. Residues 64-77 lie on the Cytoplasmic side of the membrane; it reads GYQKKLRSMTDKYR. The helical transmembrane segment at 78–99 threads the bilayer; the sequence is LHLSVADLLFVITLPFWAVDAV. The segment at 94-97 is chemokine binding; it reads WAVD. Topologically, residues 100-110 are extracellular; it reads ANWYFGNFLCK. Residues 111 to 130 form a helical membrane-spanning segment; that stretch reads AVHVIYTVNLYSSVLILAFI. The chemokine binding stretch occupies residues 113-117; sequence HVIYT. Residues 131–154 lie on the Cytoplasmic side of the membrane; that stretch reads SLDRYLAIVHATNSQRPRKLLAEK. Residues 133–135 carry the Important for signaling motif; it reads DRY. Positions 135–147 are involved in dimerization; when bound to chemokine; sequence YLAIVHATNSQRP. Residues 155–174 form a helical membrane-spanning segment; it reads VVYVGVWIPALLLTIPDFIF. The Extracellular segment spans residues 175-195; the sequence is ANVSEAEDRYICDRFYPNDLW. The chemokine binding, important for signaling stretch occupies residues 186 to 190; that stretch reads CDRFY. The segment at 191-210 is involved in dimerization; the sequence is PNDLWVVVFQFQHIMVGLIL. The chain crosses the membrane as a helical span at residues 196–216; the sequence is VVVFQFQHIMVGLILPGIVIL. Topologically, residues 217 to 241 are cytoplasmic; it reads SCYCIIISKLSHSKGHQKRKALKTT. Residues 242–261 traverse the membrane as a helical segment; that stretch reads VILILAFFACWLPYYIGISI. Residues 262–282 lie on the Extracellular side of the membrane; the sequence is DSFILLEIIKQGCEFESTVHK. The involved in dimerization stretch occupies residues 266–268; that stretch reads LLE. The chain crosses the membrane as a helical span at residues 283 to 302; it reads WISITEALAFFHCCLNPILY. Topologically, residues 303–352 are cytoplasmic; sequence AFLGAKFKSSAQHALTSVSRGSSLKILSKGKRGGHSSVSTESESSSFHSS. S319 and S321 each carry phosphoserine. Phosphoserine; by PKC and GRK6 is present on residues S324 and S325. The tract at residues 329–352 is disordered; it reads LSKGKRGGHSSVSTESESSSFHSS. S330 is subject to Phosphoserine; by GRK6. K331 is covalently cross-linked (Glycyl lysine isopeptide (Lys-Gly) (interchain with G-Cter in ubiquitin)). Low complexity predominate over residues 337–352; the sequence is HSSVSTESESSSFHSS. Phosphoserine; by GRK6 is present on S339. Residues S348 and S351 each carry the phosphoserine modification.

It belongs to the G-protein coupled receptor 1 family. As to quaternary structure, monomer. Can form homodimers. Interacts with CD164. Interacts with ARRB2; the interaction is dependent on the C-terminal phosphorylation of CXCR4 and allows activation of MAPK1 and MAPK3. Interacts with ARR3; the interaction is dependent on the C-terminal phosphorylation of CXCR4 and modulates calcium mobilization. Interacts with RNF113A; the interaction, enhanced by CXCL12, promotes CXCR4 ubiquitination and subsequent degradation. Interacts (via the cytoplasmic C-terminal) with ITCH (via the WW domains I and II); the interaction, enhanced by CXCL12, promotes CXCR4 ubiquitination and leads to its degradation. Interacts with extracellular ubiquitin. Interacts with DBN1; this interaction is enhanced by antigenic stimulation. Following LPS binding, may form a complex with GDF5, HSP90AA1 and HSPA8. Phosphorylated on agonist stimulation. Rapidly phosphorylated on serine and threonine residues in the C-terminal. Phosphorylation at Ser-324 and Ser-325 leads to recruitment of ITCH, ubiquitination and protein degradation. In terms of processing, ubiquitinated after ligand binding, leading to its degradation. Ubiquitinated by ITCH at the cell membrane on agonist stimulation. The ubiquitin-dependent mechanism, endosomal sorting complex required for transport (ESCRT), then targets CXCR4 for lysosomal degradation. This process is dependent also on prior Ser-/Thr-phosphorylation in the C-terminal of CXCR4. Also binding of ARRB1 to STAM negatively regulates CXCR4 sorting to lysosomes though modulating ubiquitination of SFR5S. Post-translationally, sulfation is required for efficient binding of CXCL12/SDF-1alpha and promotes its dimerization. O- and N-glycosylated. N-glycosylation can mask coreceptor function. The O-glycosylation chondroitin sulfate attachment does not affect interaction with CXCL12/SDF-1alpha nor its coreceptor activity.

Its subcellular location is the cell membrane. It localises to the cell junction. It is found in the early endosome. The protein resides in the late endosome. The protein localises to the lysosome. Receptor for the C-X-C chemokine CXCL12/SDF-1 that transduces a signal by increasing intracellular calcium ion levels and enhancing MAPK1/MAPK3 activation. Involved in the AKT signaling cascade. Plays a role in regulation of cell migration, e.g. during wound healing. Acts as a receptor for extracellular ubiquitin; leading to enhanced intracellular calcium ions and reduced cellular cAMP levels. Binds bacterial lipopolysaccharide (LPS) et mediates LPS-induced inflammatory response, including TNF secretion by monocytes. Involved in hematopoiesis and in cardiac ventricular septum formation. Also plays an essential role in vascularization of the gastrointestinal tract, probably by regulating vascular branching and/or remodeling processes in endothelial cells. Involved in cerebellar development. In the CNS, could mediate hippocampal-neuron survival. This chain is C-X-C chemokine receptor type 4 (CXCR4), found in Tupaia chinensis (Chinese tree shrew).